The following is a 124-amino-acid chain: Fluoride-specific ion channel FluC (124 aa).

4 consecutive transmembrane segments (helical) span residues 4–24 (VLFVALGGSIGAVLRYLISLL), 35–55 (FGTLVVNILGSFLMGVIFALG), 62–82 (PEFKAFIGVGMLGALTTFSTF), and 95–115 (LVKAVFNVVVNVGVCIFVVYL). Na(+) is bound by residues Gly-74 and Thr-77.

This sequence belongs to the fluoride channel Fluc/FEX (TC 1.A.43) family.

Its subcellular location is the cell inner membrane. It carries out the reaction fluoride(in) = fluoride(out). Na(+) is not transported, but it plays an essential structural role and its presence is essential for fluoride channel function. Its function is as follows. Fluoride-specific ion channel. Important for reducing fluoride concentration in the cell, thus reducing its toxicity. The protein is Fluoride-specific ion channel FluC of Shewanella pealeana (strain ATCC 700345 / ANG-SQ1).